A 289-amino-acid chain; its full sequence is ATP synthase gamma chain (289 aa).

It belongs to the ATPase gamma chain family. As to quaternary structure, F-type ATPases have 2 components, CF(1) - the catalytic core - and CF(0) - the membrane proton channel. CF(1) has five subunits: alpha(3), beta(3), gamma(1), delta(1), epsilon(1). CF(0) has three main subunits: a, b and c.

Its subcellular location is the cell inner membrane. In terms of biological role, produces ATP from ADP in the presence of a proton gradient across the membrane. The gamma chain is believed to be important in regulating ATPase activity and the flow of protons through the CF(0) complex. The chain is ATP synthase gamma chain from Aromatoleum aromaticum (strain DSM 19018 / LMG 30748 / EbN1) (Azoarcus sp. (strain EbN1)).